A 116-amino-acid chain; its full sequence is Ribosome-binding factor A (116 aa).

It belongs to the RbfA family. In terms of assembly, monomer. Binds 30S ribosomal subunits, but not 50S ribosomal subunits or 70S ribosomes.

The protein resides in the cytoplasm. One of several proteins that assist in the late maturation steps of the functional core of the 30S ribosomal subunit. Associates with free 30S ribosomal subunits (but not with 30S subunits that are part of 70S ribosomes or polysomes). Required for efficient processing of 16S rRNA. May interact with the 5'-terminal helix region of 16S rRNA. The polypeptide is Ribosome-binding factor A (Chlorobium phaeobacteroides (strain DSM 266 / SMG 266 / 2430)).